Here is a 270-residue protein sequence, read N- to C-terminus: NADPH-dependent 7-cyano-7-deazaguanine reductase (270 aa).

Residue Ile-79–Ser-81 coordinates substrate. Residue Ser-81–Lys-82 coordinates NADPH. Catalysis depends on Cys-177, which acts as the Thioimide intermediate. Asp-184 acts as the Proton donor in catalysis. Position 216 to 217 (His-216 to Glu-217) interacts with substrate. Arg-245 to Gly-246 provides a ligand contact to NADPH.

The protein belongs to the GTP cyclohydrolase I family. QueF type 2 subfamily. As to quaternary structure, homodimer.

The protein resides in the cytoplasm. It catalyses the reaction 7-aminomethyl-7-carbaguanine + 2 NADP(+) = 7-cyano-7-deazaguanine + 2 NADPH + 3 H(+). The protein operates within tRNA modification; tRNA-queuosine biosynthesis. In terms of biological role, catalyzes the NADPH-dependent reduction of 7-cyano-7-deazaguanine (preQ0) to 7-aminomethyl-7-deazaguanine (preQ1). The chain is NADPH-dependent 7-cyano-7-deazaguanine reductase from Acinetobacter baumannii (strain AB307-0294).